The following is a 202-amino-acid chain: B-cell CLL/lymphoma 7 protein family member B (202 aa).

Residues Asp-53 to Ser-202 are disordered. The segment covering Glu-90–Asp-99 has biased composition (polar residues). Residues Ser-107–Pro-123 are compositionally biased toward low complexity. Phosphoserine is present on residues Ser-114, Ser-118, Ser-120, Ser-122, Ser-127, Ser-148, and Ser-152.

The protein belongs to the BCL7 family.

Positive regulator of apoptosis. Plays a role in the Wnt signaling pathway, negatively regulating the expression of Wnt signaling components CTNNB1 and HMGA1. Involved in cell cycle progression, maintenance of the nuclear structure and stem cell differentiation. May play a role in lung tumor development or progression. This chain is B-cell CLL/lymphoma 7 protein family member B (Bcl7b), found in Mus musculus (Mouse).